Consider the following 483-residue polypeptide: Triacylglycerol lipase ptl3 (483 aa).

The PNPLA domain maps to 141–340 (LILSGGGTFG…DNDIPHAKLT (200 aa)). Residues 145–150 (GGGTFG) carry the GXGXXG motif. Positions 172–176 (GSSAG) match the GXSXG motif. Ser174 acts as the Nucleophile in catalysis. The active-site Proton acceptor is Asp327.

It localises to the cytoplasm. The protein resides in the lipid droplet. The catalysed reaction is a triacylglycerol + H2O = a diacylglycerol + a fatty acid + H(+). Functionally, lipid particle-localized triacylglycerol (TAG) lipase. The lipid droplet/particle is a lipid storage compartment which serves as a depot of energy and building blocks for membrane lipid biosynthesis. Involved in the mobilization of the non-polar storage lipids triacylglycerols (TAGs) from lipid particles by hydrolysis of TAGs, releasing and supplying specific fatty acids to the appropriate metabolic pathways. This Schizosaccharomyces pombe (strain 972 / ATCC 24843) (Fission yeast) protein is Triacylglycerol lipase ptl3 (ptl3).